The primary structure comprises 466 residues: Phosphomethylpyrimidine synthase (466 aa).

Substrate-binding positions include N80, M109, Y139, H175, 195–197 (SRG), 236–239 (DSLR), and E275. Position 279 (H279) interacts with Zn(2+). A substrate-binding site is contributed by Y302. H343 lines the Zn(2+) pocket. Residues C423, C426, and C431 each coordinate [4Fe-4S] cluster.

This sequence belongs to the ThiC family. It depends on [4Fe-4S] cluster as a cofactor.

The catalysed reaction is 5-amino-1-(5-phospho-beta-D-ribosyl)imidazole + S-adenosyl-L-methionine = 4-amino-2-methyl-5-(phosphooxymethyl)pyrimidine + CO + 5'-deoxyadenosine + formate + L-methionine + 3 H(+). The protein operates within cofactor biosynthesis; thiamine diphosphate biosynthesis. Catalyzes the synthesis of the hydroxymethylpyrimidine phosphate (HMP-P) moiety of thiamine from aminoimidazole ribotide (AIR) in a radical S-adenosyl-L-methionine (SAM)-dependent reaction. The protein is Phosphomethylpyrimidine synthase of Prochlorococcus marinus (strain NATL1A).